The sequence spans 138 residues: uncharacterized protein (138 aa).

2 consecutive transmembrane segments (helical) span residues 21-43 and 48-65; these read TAFI…AGGA and SLIA…YAII.

The protein localises to the cell membrane. This is an uncharacterized protein from Archaeoglobus fulgidus (strain ATCC 49558 / DSM 4304 / JCM 9628 / NBRC 100126 / VC-16).